The chain runs to 276 residues: NADPH-dependent 7-cyano-7-deazaguanine reductase (276 aa).

Residue 80–82 participates in substrate binding; it reads VES. NADPH is bound at residue 82 to 83; the sequence is SK. C183 serves as the catalytic Thioimide intermediate. D190 functions as the Proton donor in the catalytic mechanism. A substrate-binding site is contributed by 222-223; sequence HE. An NADPH-binding site is contributed by 251 to 252; sequence RG.

This sequence belongs to the GTP cyclohydrolase I family. QueF type 2 subfamily. As to quaternary structure, homodimer.

It localises to the cytoplasm. It catalyses the reaction 7-aminomethyl-7-carbaguanine + 2 NADP(+) = 7-cyano-7-deazaguanine + 2 NADPH + 3 H(+). It functions in the pathway tRNA modification; tRNA-queuosine biosynthesis. In terms of biological role, catalyzes the NADPH-dependent reduction of 7-cyano-7-deazaguanine (preQ0) to 7-aminomethyl-7-deazaguanine (preQ1). The sequence is that of NADPH-dependent 7-cyano-7-deazaguanine reductase from Burkholderia cenocepacia (strain HI2424).